The following is a 609-amino-acid chain: Alpha-glucosides permease MPH2 (609 aa).

Residues 1 to 106 (MKNLSFLINR…AAAWSLLVST (106 aa)) lie on the Cytoplasmic side of the membrane. A helical transmembrane segment spans residues 107–127 (TLIMEGYDTAILGAFYALPIF). Residues 128 to 142 (QRKFGSQNDKTGEWE) lie on the Extracellular side of the membrane. The chain crosses the membrane as a helical span at residues 143-163 (ISASWQIGLTLCYMAGEIVGL). The Cytoplasmic segment spans residues 164-178 (QLTGPSVDLVGNRYT). The helical transmembrane segment at 179-199 (LIIALFFLAAFTFILYFCNSL) threads the bilayer. A topological domain (extracellular) is located at residue G200. Residues 201–221 (MIAVGQALCGMPWGCFQCLTV) form a helical membrane-spanning segment. At 222-234 (SYASEICPLALRY) the chain is on the cytoplasmic side. Residues 235–255 (YLTTYSNLCWLFGQLFAAGIM) traverse the membrane as a helical segment. The Extracellular portion of the chain corresponds to 256–270 (KNSQKKYADSELGYK). Residues 271 to 291 (LPFALQWILPVPLALGIFFAP) traverse the membrane as a helical segment. Residues 292–363 (ESPWWLVKKG…EDKINRRRTR (72 aa)) lie on the Cytoplasmic side of the membrane. Residues 364-384 (ITCLCWAGQATCGSILIGYST) form a helical membrane-spanning segment. At 385-397 (YFYEKAGVSTEMS) the chain is on the extracellular side. The chain crosses the membrane as a helical span at residues 398 to 418 (FTFSIIQYCLGICATFLSWWA). Topologically, residues 419–426 (SKYFGRYD) are cytoplasmic. Residues 427-447 (LYAFGLAFQTIVFFIIGGLGC) traverse the membrane as a helical segment. The Extracellular segment spans residues 448–459 (SSTHGSKMGSGS). A helical membrane pass occupies residues 460–480 (LLMAVAFFYNLGIAPVVFCLV). The Cytoplasmic segment spans residues 481-492 (SEMPSSRLRTKT). The helical transmembrane segment at 493-513 (IILARNTYNVVSIICSVLILY) threads the bilayer. The Extracellular segment spans residues 514–525 (QLNSKKWNWGAK). Residues 526 to 546 (SGFFWGVLCFCTLIWAVVDLP) form a helical membrane-spanning segment. Topologically, residues 547-609 (ETAGKTFVEI…QRNSNVSHHL (63 aa)) are cytoplasmic.

It belongs to the major facilitator superfamily. Sugar transporter (TC 2.A.1.1) family.

It localises to the cell membrane. High-affinity uptake of maltose and maltotriose. Also transports alpha-methylglucoside, glucose and turanose but not melezitose or trehalose. The sequence is that of Alpha-glucosides permease MPH2 (MPH2) from Saccharomyces cerevisiae (strain ATCC 204508 / S288c) (Baker's yeast).